The primary structure comprises 1685 residues: MAQISSNSGFKECPSSHPEPTRAKDVDKEEALQMEAEALAKLQKDRQVTDNQRGFELSSSTRKKAQVYNKQDYDLMVFPESDSQKRALDIDVEKLTQAELEKLLLDDSLETRKTPVLPVTPILSPSFSAQLYFRPTIQRGQWPPGLSGPSTYALPSIYPSTYSKQAAFQNGFNPRMPTFPSTEPIYLSLPGQSPYFSYPLTPATPFHPQGSLPIYRPVVSPDMAKLFDKIASTSEFLKNGKARADLEITDSKVSNLQVSPKSEDISKFDWLDLDPLSKPKVDNVEVLDHEEEKNVSSLLAKDPWDAVLLEERSTANCHLERKMNGKSLSVATVTRSQSLNIRTTQLAKAHISQKDPNGTSSLPTGSSLLQEVEVQNEEMAAFSRSITKLKTKFPYTNHHTNPGYLLSPVTAQRNICGENASVKVSIDIEGFQLPVTFTCDVSSTVEIIIMQALCWVHDDLNQVDVGSYVLKVCGQEEVLQNNHCLGSHEHIQNCRKWDTEIRLQLLTFSAMCQNLARTAEDDETPVDLNKHLYQIEKPYKEAMTRHPVEELLDSYHNQVELALQIENQHRAVDQVIKAVRKICSALDGVETLAITESVKKLKRAVNLPRSKTADVASLFGGEDTSKSSTRGSLNPENPVQVSINQLTAAIYDLLRLHANSGRSPTDCAQSSKSVKEAWTTTEQLQFTIFAAHGISSNWVSNYEKYYLICSLSHNGKDLFKPIQSKKVGTYKNFFYLIKWDELIIFPIQISQLPLESLLHLTLFGILNQSSGSSPDSNKQRKGPEALGKVSLPLFDFKRFLTCGTKLLYLWTSSHTNSVPGAVTKKGYVMERIVLQVDFPSPAFDIIYTTPQVDRSIIQQHNLETLENDVKGKLLDILHKDSSLGLSKEDKAFLWEKRYYCFKHPNCLPKILASAPNWKWVNLAKTYSLLHQWPALYPLIALELLDSKFADQEVRSLAVTWIEAISDDELTDLLPQFVQALKYEIYLNSSLVQFLLSRALGNIQIAHNLYWLLKDALHDVQFSTRYEHVLGALLSVGGKRLREELRKQTKLVQLLGGVAEKVRQASGSARQVVLQRSMERVQSFFQKNKCRLPLKPSLVAKELSIKSCSFFSSNAVPLKVTMVNADPMGEEINVMFKVGEDLRQDMLALQMIKIMDKIWLKEGLDLRMVIFKCLSTGRDRGMVELVPASDTLRKIQVEYGVTGSFKDKPLAEWLRKYNPSEEEYEKASENFIYSCAGCCVATYVLGICDRHNDNIMLRSTGHMFHIDFGKFLGHAQMFGTFKRDRAPFVLTSDMAYVINGGEKPTIRFQLFVDLCCQAYNLIRKQTNLFLNLLSLMIPSGLPELTSIQDLKYVRDALQPQTTDAEATIFFTRLIESSLGSIATKFNFLIHNLAQLRFSGLPSNDEPILSFSPKTYSFKQDGRIKEVSVFTYHKKYNPDKHYIYVVRILREGQIEPSFVFRTFDEFQELHNKLSIIFPLWKLPGFPNRMVLGRTHIKDVAAKRKIELNSYLQSLMNASTDVAECDLVCTFFHPLLRDEKAEGIARSADAGSFSPPTPGQIGGAVKLSISYRNGTLFIMVMHTKDLVTEDGADPNPYVKTYLLPDNHKTSKRKTKISRKTRNPTFNEMLVYSGYSKETLRQRELQLSVLSAESLRENFFLGGVTLPLKDFNLSKETVKWYQLTAATYL.

Disordered regions lie at residues 1–33 and 41–60; these read MAQI…EALQ and KLQK…LSSS. An N-acetylalanine modification is found at Ala-2. Positions 2-142 are interaction with clathrin; sufficient to induce clathrin assembly; sequence AQISSNSGFK…FRPTIQRGQW (141 aa). Over residues 19-31 the composition is skewed to basic and acidic residues; it reads EPTRAKDVDKEEA. Residues 49-60 are compositionally biased toward polar residues; sequence TDNQRGFELSSS. Phosphoserine is present on residues Ser-60, Ser-108, Ser-259, Ser-327, and Ser-338. The region spanning 419 to 507 is the PI3K-RBD domain; sequence NASVKVSIDI…DTEIRLQLLT (89 aa). The residue at position 628 (Ser-628) is a Phosphoserine. A C2 PI3K-type domain is found at 680–839; that stretch reads TTEQLQFTIF…ERIVLQVDFP (160 aa). Residues 859-1035 form the PIK helical domain; the sequence is QHNLETLEND…EHVLGALLSV (177 aa). A PI3K/PI4K catalytic domain is found at 1103-1381; it reads SIKSCSFFSS…LIESSLGSIA (279 aa). Residues 1109–1115 form a G-loop region; it reads FFSSNAV. The catalytic loop stretch occupies residues 1245-1253; it reads GICDRHNDN. Residues 1264–1290 form an activation loop region; the sequence is HIDFGKFLGHAQMFGTFKRDRAPFVLT. The 117-residue stretch at 1420–1536 folds into the PX domain; it reads GRIKEVSVFT…TFFHPLLRDE (117 aa). An interaction with PtdIns(4,5)P2-containing membranes region spans residues 1486–1491; sequence RMVLGR. A Phosphoserine modification is found at Ser-1551. In terms of domain architecture, C2 spans 1554 to 1677; the sequence is TPGQIGGAVK…NLSKETVKWY (124 aa). Residues 1607-1618 carry the Nuclear localization signal motif; the sequence is SKRKTKISRKTR.

The protein belongs to the PI3/PI4-kinase family. Part of a complex with ERBB2 and EGFR. Interacts with clathrin trimers. Interacts with SBF2/MTMR13. Ca(2+) serves as cofactor. Requires Mg(2+) as cofactor. Post-translationally, phosphorylated on Ser-259 during mitosis and upon UV irradiation; which does not change enzymatic activity but leads to proteasomal degradation. Phosphorylated upon insulin stimulation; which may lead to enzyme activation.

It localises to the cell membrane. Its subcellular location is the cytoplasmic vesicle. The protein localises to the clathrin-coated vesicle. It is found in the nucleus. The protein resides in the cytoplasm. It localises to the golgi apparatus. Its subcellular location is the trans-Golgi network. It carries out the reaction a 1,2-diacyl-sn-glycero-3-phospho-(1D-myo-inositol 4-phosphate) + ATP = a 1,2-diacyl-sn-glycero-3-phospho-(1D-myo-inositol-3,4-bisphosphate) + ADP + H(+). It catalyses the reaction a 1,2-diacyl-sn-glycero-3-phospho-(1D-myo-inositol) + ATP = a 1,2-diacyl-sn-glycero-3-phospho-(1D-myo-inositol-3-phosphate) + ADP + H(+). The enzyme catalyses a 1,2-diacyl-sn-glycero-3-phospho-(1D-myo-inositol-4,5-bisphosphate) + ATP = a 1,2-diacyl-sn-glycero-3-phospho-(1D-myo-inositol-3,4,5-trisphosphate) + ADP + H(+). With respect to regulation, only slightly inhibited by wortmannin and LY294002. Activated by clathrin and insulin. Its function is as follows. Generates phosphatidylinositol 3-phosphate (PtdIns3P) and phosphatidylinositol 3,4-bisphosphate (PtdIns(3,4)P2) that act as second messengers. Has a role in several intracellular trafficking events. Functions in insulin signaling and secretion. Required for translocation of the glucose transporter SLC2A4/GLUT4 to the plasma membrane and glucose uptake in response to insulin-mediated RHOQ activation. Regulates insulin secretion through two different mechanisms: involved in glucose-induced insulin secretion downstream of insulin receptor in a pathway that involves AKT1 activation and TBC1D4/AS160 phosphorylation, and participates in the late step of insulin granule exocytosis probably in insulin granule fusion. Synthesizes PtdIns3P in response to insulin signaling. Functions in clathrin-coated endocytic vesicle formation and distribution. Regulates dynamin-independent endocytosis, probably by recruiting EEA1 to internalizing vesicles. In neurosecretory cells synthesizes PtdIns3P on large dense core vesicles. Participates in calcium induced contraction of vascular smooth muscle by regulating myosin light chain (MLC) phosphorylation through a mechanism involving Rho kinase-dependent phosphorylation of the MLCP-regulatory subunit MYPT1. May play a role in the EGF signaling cascade. May be involved in mitosis and UV-induced damage response. Required for maintenance of normal renal structure and function by supporting normal podocyte function. Involved in the regulation of ciliogenesis and trafficking of ciliary components. In Pongo abelii (Sumatran orangutan), this protein is Phosphatidylinositol 4-phosphate 3-kinase C2 domain-containing subunit alpha (PIK3C2A).